A 225-amino-acid polypeptide reads, in one-letter code: Small ribosomal subunit protein uS3 (225 aa).

One can recognise a KH type-2 domain in the interval 16-85; sequence VCEYVVKETE…TPQIEVKDVK (70 aa). Positions 202-225 are disordered; it reads EVGTESKADQTDVEGRETGNAEES. The segment covering 205 to 225 has biased composition (basic and acidic residues); the sequence is TESKADQTDVEGRETGNAEES.

Belongs to the universal ribosomal protein uS3 family. As to quaternary structure, part of the 30S ribosomal subunit.

Binds the lower part of the 30S subunit head. This is Small ribosomal subunit protein uS3 from Thermoplasma acidophilum (strain ATCC 25905 / DSM 1728 / JCM 9062 / NBRC 15155 / AMRC-C165).